The primary structure comprises 201 residues: Recombination protein RecR (201 aa).

Residues 57-74 (CSICGNITATDTDPCVIC) form a C4-type zinc finger. The Toprim domain maps to 82–178 (STVFVVENSR…AVTRLAHGLA (97 aa)).

This sequence belongs to the RecR family.

In terms of biological role, may play a role in DNA repair. It seems to be involved in an RecBC-independent recombinational process of DNA repair. It may act with RecF and RecO. In Leuconostoc mesenteroides subsp. mesenteroides (strain ATCC 8293 / DSM 20343 / BCRC 11652 / CCM 1803 / JCM 6124 / NCDO 523 / NBRC 100496 / NCIMB 8023 / NCTC 12954 / NRRL B-1118 / 37Y), this protein is Recombination protein RecR.